The following is a 1903-amino-acid chain: Plexin-A4 (1903 aa).

An N-terminal signal peptide occupies residues 1-26 (MAFHNRRWNFTFSCCVVVLLLPLVAA). Residues 27-515 (RPQQPSAATR…SESQLTRVPV (489 aa)) form the Sema domain. The Extracellular portion of the chain corresponds to 27 to 1246 (RPQQPSAATR…ITSDSPLSST (1220 aa)). 2 cysteine pairs are disulfide-bonded: Cys97/Cys106 and Cys132/Cys140. The N-linked (GlcNAc...) asparagine glycan is linked to Asn166. Intrachain disulfides connect Cys291–Cys413, Cys307–Cys364, and Cys382–Cys401. N-linked (GlcNAc...) asparagine glycosylation is present at Asn450. In terms of domain architecture, PSI 1 spans 517–567 (ACEQYSSCNECLGSGDPHCGWCVLHSMCTRKEKCERSSEPRRFASNIKQCV). Disulfide bonds link Cys518-Cys535, Cys524-Cys566, Cys527-Cys544, and Cys538-Cys550. Residues Asn575 and Asn600 are each glycosylated (N-linked (GlcNAc...) asparagine). Residues Cys601 and Cys620 are joined by a disulfide bond. Residues Asn656, Asn663, Asn764, and Asn772 are each glycosylated (N-linked (GlcNAc...) asparagine). The PSI 2 domain occupies 663 to 710 (NCSVHKSCLSCVGSPYQCHWCKYRHTCTHDPSSCSFQEGRVKQPEECP). Residues 811 to 864 (KCDARRESCGLCLKADPLFGCVWCKGENRCSLKQHCSYPQSMWLEHNGINSKCT) form the PSI 3 domain. IPT/TIG domains follow at residues 866–960 (PRIT…YYFV), 962–1046 (PQLL…FEYV), 1049–1148 (PTIT…FVYY), and 1151–1246 (PVFE…LSST). N-linked (GlcNAc...) asparagine glycans are attached at residues Asn981, Asn992, Asn1025, Asn1141, Asn1189, and Asn1214. Residues 1247-1267 (AVISIAGAGGLLIFFIVIVLI) form a helical membrane-spanning segment. Residues 1268–1903 (AYKRKSRESD…QVVAFMSLES (636 aa)) are Cytoplasmic-facing.

Belongs to the plexin family.

Its subcellular location is the cell membrane. Involved in the development of primary sensory neurons especially in branching of the peripheral axons. Interacts with the SLIT2 signaling specifically to promote axonal branching of Rohon-Beard neurons and the trigeminal sensory ganglion neurons. The polypeptide is Plexin-A4 (plxna4) (Danio rerio (Zebrafish)).